The primary structure comprises 445 residues: mRNA cleavage and polyadenylation factor CLP1 (445 aa).

Residues Asp-33, Lys-72, and Gln-133–Ser-138 contribute to the ATP site.

The protein belongs to the Clp1 family. Clp1 subfamily. Component of the cleavage factor IA (CF IA) complex, which is a heterohexameric complex with 2:2:1:1 stoichiometry of RNA14, RNA15, PCF11 and CLP1. It contains 2 copies of an RNA14-RNA15 dimer and 1 copy of CLP1-PCF11. The complex interacts with the cleavage factor HRB1/CF IB to form the cleavage factor I (CF I) complex, and binds to RNA. Interacts directly with PCF11. Interacts with the CPF components CFT1, PTA1, PFS2, YSH1 and SSU72.

Its subcellular location is the nucleus. Its function is as follows. Component of the cleavage factor IA (CF IA) complex, which is involved in the endonucleolytic cleavage during polyadenylation-dependent pre-mRNA 3'-end formation. Associates with HRB1/CF IB to form the cleavage factor I (CF I) complex. CF I is required for correct positioning of a larger protein complex, the cleavage and polyadenylation factor (CPF) complex, which contains the catalytic subunits executing mRNA cleavage and polyadenylation. CLP1 mediates interactions between CF IA and CPF factors. CLP1 is also involved in maintaining the CF IA interaction with the C-terminal domain of RNA Pol II largest subunit via PCF11, which links pre-mRNA 3'-end processing to transcription termination. The protein is mRNA cleavage and polyadenylation factor CLP1 of Saccharomyces cerevisiae (strain YJM789) (Baker's yeast).